A 247-amino-acid chain; its full sequence is E3 ubiquitin-protein ligase RNF182 (247 aa).

The RING-type zinc finger occupies 20–68 (CKICYNRYNLKQRKPKVLECCHRVCAKCLYKIIDFGDSPQGVIVCPFCR). A run of 2 helical transmembrane segments spans residues 184 to 204 (VLVWLLGLLYFSSLPLGIYLL) and 211 to 231 (LGVVFVSLVPSSLVILMVYGF).

Interacts with ATP6V0C. As to expression, up-regulated in neuronal cells subjected to cell death-inducing injuries, such as oxygen and glucose deprivation (at protein level). Could be up-regulated in Alzheimer disease brains. Highly expressed in innate immune organs such as lymph nodes and spleen and in immune cells such as macrophages and dendritic cells.

It is found in the membrane. The protein resides in the cytoplasm. The enzyme catalyses S-ubiquitinyl-[E2 ubiquitin-conjugating enzyme]-L-cysteine + [acceptor protein]-L-lysine = [E2 ubiquitin-conjugating enzyme]-L-cysteine + N(6)-ubiquitinyl-[acceptor protein]-L-lysine.. It participates in protein modification; protein ubiquitination. Functionally, E3 ubiquitin-protein ligase that mediates the ubiquitination of ATP6V0C and targets it to degradation via the ubiquitin-proteasome pathway. Also plays a role in the inhibition of TLR-triggered innate immune response by mediating 'Lys'-48-linked ubiquitination and subsequent degradation of NF-kappa-B component RELA. The polypeptide is E3 ubiquitin-protein ligase RNF182 (RNF182) (Homo sapiens (Human)).